The sequence spans 225 residues: NAD(P)H-quinone oxidoreductase subunit K, chloroplastic (225 aa).

[4Fe-4S] cluster-binding residues include Cys-43, Cys-44, Cys-108, and Cys-139.

It belongs to the complex I 20 kDa subunit family. In terms of assembly, NDH is composed of at least 16 different subunits, 5 of which are encoded in the nucleus. Requires [4Fe-4S] cluster as cofactor.

The protein resides in the plastid. It localises to the chloroplast thylakoid membrane. The catalysed reaction is a plastoquinone + NADH + (n+1) H(+)(in) = a plastoquinol + NAD(+) + n H(+)(out). It catalyses the reaction a plastoquinone + NADPH + (n+1) H(+)(in) = a plastoquinol + NADP(+) + n H(+)(out). NDH shuttles electrons from NAD(P)H:plastoquinone, via FMN and iron-sulfur (Fe-S) centers, to quinones in the photosynthetic chain and possibly in a chloroplast respiratory chain. The immediate electron acceptor for the enzyme in this species is believed to be plastoquinone. Couples the redox reaction to proton translocation, and thus conserves the redox energy in a proton gradient. This Lolium perenne (Perennial ryegrass) protein is NAD(P)H-quinone oxidoreductase subunit K, chloroplastic.